A 146-amino-acid polypeptide reads, in one-letter code: MKLFKAEQWNIEVLLPLFEAYRQAYGQAENPERTLAFLTNRMRFNESLFFIAVDENEKAIGFVQLFPRLSSLQLQRYWQITDIFVLEHAQQTEIYAALISKAKDFVHFTQSNRLVAELAQNQYSMLESEGFKLNPKERLFELSLSC.

The N-acetyltransferase domain maps to 1–146; it reads MKLFKAEQWN…ERLFELSLSC (146 aa).

The chain is Probable acetyltransferase HI_0677 from Haemophilus influenzae (strain ATCC 51907 / DSM 11121 / KW20 / Rd).